Here is a 150-residue protein sequence, read N- to C-terminus: Macrodomain Ter protein (150 aa).

The protein belongs to the MatP family. As to quaternary structure, homodimer.

Its subcellular location is the cytoplasm. Its function is as follows. Required for spatial organization of the terminus region of the chromosome (Ter macrodomain) during the cell cycle. Prevents early segregation of duplicated Ter macrodomains during cell division. Binds specifically to matS, which is a 13 bp signature motif repeated within the Ter macrodomain. This chain is Macrodomain Ter protein, found in Salmonella agona (strain SL483).